An 880-amino-acid chain; its full sequence is Alanine--tRNA ligase (880 aa).

His566, His570, Cys668, and His672 together coordinate Zn(2+).

This sequence belongs to the class-II aminoacyl-tRNA synthetase family. It depends on Zn(2+) as a cofactor.

The protein resides in the cytoplasm. It carries out the reaction tRNA(Ala) + L-alanine + ATP = L-alanyl-tRNA(Ala) + AMP + diphosphate. Its function is as follows. Catalyzes the attachment of alanine to tRNA(Ala) in a two-step reaction: alanine is first activated by ATP to form Ala-AMP and then transferred to the acceptor end of tRNA(Ala). Also edits incorrectly charged Ser-tRNA(Ala) and Gly-tRNA(Ala) via its editing domain. The polypeptide is Alanine--tRNA ligase (Nostoc punctiforme (strain ATCC 29133 / PCC 73102)).